A 413-amino-acid polypeptide reads, in one-letter code: MSYLIEQCKRLKEASYALGMISTKDKDEALRLIIDSIKRNKDDILAENDKDVLAAKEKGTKDSLIDRLKLTEDRIQGILEGIETIIGLKDPIWRSNDVWTLENGLTISKMTVPLGVIGIIYESRPNVTVDAFSLALKSGNCILLRGSSSAIHSNKMIVSAIKEGLRRSKVSEDIIELIEDTDRNVVKEMLTLNEYIDVIIPRGGADLIRFVVDHATVPTIETGIGNCHIYVDESANLENAIQIITNAKIQRPGVCNACETTLIHEDIAPKFLPMLAAALKDKVELKGCPRTREIIQAAEATDMDWAEEYLDYILAVKVVSNVDEAIGHIQAYGTKHSEAIITENYTNANYFLRRVDAAAVYVNASTRFTDGGAFGFGGEMGISTQKTHARGPMGLNELVTMKYTVVGNGQIRQ.

This sequence belongs to the gamma-glutamyl phosphate reductase family.

The protein resides in the cytoplasm. It catalyses the reaction L-glutamate 5-semialdehyde + phosphate + NADP(+) = L-glutamyl 5-phosphate + NADPH + H(+). It participates in amino-acid biosynthesis; L-proline biosynthesis; L-glutamate 5-semialdehyde from L-glutamate: step 2/2. In terms of biological role, catalyzes the NADPH-dependent reduction of L-glutamate 5-phosphate into L-glutamate 5-semialdehyde and phosphate. The product spontaneously undergoes cyclization to form 1-pyrroline-5-carboxylate. In Alkaliphilus oremlandii (strain OhILAs) (Clostridium oremlandii (strain OhILAs)), this protein is Gamma-glutamyl phosphate reductase.